The primary structure comprises 767 residues: Mst2 complex subunit nto1 (767 aa).

The segment at 194–244 (DGRCVICNEAECENSNAIVFCDNCNTSVHQNCYGIPFVPEGQWFCKKCLLA) adopts a PHD-type 1 zinc-finger fold. Residues 248-281 (VICCAFCPDRDGAFCTTLDGRWCHTICAIAIPEI) form a C2HC pre-PHD-type zinc finger. The PHD-type 2 zinc finger occupies 305-363 (LVCCICKLRWGTCVQCSDKNCYAAYHITCARRAGFFYKIYSHSASYDSVDMETYCDKHT). Over residues 724 to 752 (VTGQSNHALPNSVTKKNGTKQPYTKNSLP) the composition is skewed to polar residues. The tract at residues 724 to 767 (VTGQSNHALPNSVTKKNGTKQPYTKNSLPFNERITRSKAKKNYS) is disordered.

In terms of assembly, component of the mst2 complex composed of at least eaf6, mst2, nto1, pdp3, ptf1, ptf2 and tfg3.

The protein localises to the cytoplasm. It is found in the nucleus. Its function is as follows. Component of the mst2 complex which is a highly specific H3 lysine 14 (H3K14) acetyltransferase that functions together with gcn5 to regulate global levels of H3K14 acetylation (H3K14ac), critical for DNA damage checkpoint activation. This Schizosaccharomyces pombe (strain 972 / ATCC 24843) (Fission yeast) protein is Mst2 complex subunit nto1 (nto1).